We begin with the raw amino-acid sequence, 212 residues long: Glycerol-3-phosphate acyltransferase (212 aa).

A run of 6 helical transmembrane segments spans residues 6 to 26 (IAVL…GLIL), 56 to 76 (LAAL…LLAH), 92 to 112 (LTLI…WLGF), 122 to 142 (LGVS…AWLL), 150 to 170 (SSVG…FMPA), and 171 to 191 (SHEI…LLLW).

It belongs to the PlsY family. In terms of assembly, probably interacts with PlsX.

The protein localises to the cell inner membrane. The enzyme catalyses an acyl phosphate + sn-glycerol 3-phosphate = a 1-acyl-sn-glycero-3-phosphate + phosphate. It participates in lipid metabolism; phospholipid metabolism. In terms of biological role, catalyzes the transfer of an acyl group from acyl-phosphate (acyl-PO(4)) to glycerol-3-phosphate (G3P) to form lysophosphatidic acid (LPA). This enzyme utilizes acyl-phosphate as fatty acyl donor, but not acyl-CoA or acyl-ACP. This chain is Glycerol-3-phosphate acyltransferase, found in Zymomonas mobilis subsp. mobilis (strain ATCC 31821 / ZM4 / CP4).